The following is a 482-amino-acid chain: UDP-N-acetylmuramate--L-alanine ligase (482 aa).

129-135 (GTHGKTT) contacts ATP.

Belongs to the MurCDEF family.

It is found in the cytoplasm. It catalyses the reaction UDP-N-acetyl-alpha-D-muramate + L-alanine + ATP = UDP-N-acetyl-alpha-D-muramoyl-L-alanine + ADP + phosphate + H(+). It participates in cell wall biogenesis; peptidoglycan biosynthesis. Its function is as follows. Cell wall formation. This Acinetobacter baumannii (strain SDF) protein is UDP-N-acetylmuramate--L-alanine ligase.